Reading from the N-terminus, the 173-residue chain is MPNNQNRDNFIDKAFTVIAESIVKIMPIADKEKKAYIYYRDGLAAQNNGDYSEALDYYNESLLLEENKIDRGETLKNMAIIYMSNGEEDRSIETYQKALEENPKQPSCLKNIGLIYEKRGRFAEQNGDLDQRDMWFDKAAQVWSKAVRLYPGGYLDIENWLKTSGRSSIDIYL.

TPR repeat units lie at residues 35–68 (AYIY…EENK), 72–105 (GETL…NPKQ), and 120–153 (GRFA…YPGG).

The protein belongs to the Ycf3 family.

It localises to the cellular thylakoid membrane. In terms of biological role, essential for the assembly of the photosystem I (PSI) complex. May act as a chaperone-like factor to guide the assembly of the PSI subunits. The chain is Photosystem I assembly protein Ycf3 from Prochlorococcus marinus subsp. pastoris (strain CCMP1986 / NIES-2087 / MED4).